A 214-amino-acid polypeptide reads, in one-letter code: Cutinase CUT2 (214 aa).

The N-terminal stretch at 1 to 18 is a signal peptide; sequence MQFSLSIATAILAATASA. Cysteine 40 and cysteine 117 are oxidised to a cystine. Serine 128 (nucleophile) is an active-site residue. The cysteines at positions 179 and 186 are disulfide-linked. The active site involves aspartate 183. Histidine 196 (proton donor/acceptor) is an active-site residue.

The protein belongs to the cutinase family. In terms of processing, the 2 disulfide bonds play a critical role in holding the catalytic residues in juxta-position; reduction of the disulfide bridges results in the complete inactivation of the enzyme.

The protein resides in the secreted. It carries out the reaction cutin + H2O = cutin monomers.. In terms of biological role, catalyzes the hydrolysis of complex carboxylic polyesters found in the cell wall of plants. Degrades cutin, a macromolecule that forms the structure of the plant cuticle. Required for efficient penetration of the host plant cuticle by the appressorium during the initial stage of fungal infection. The chain is Cutinase CUT2 from Pyricularia oryzae (strain 70-15 / ATCC MYA-4617 / FGSC 8958) (Rice blast fungus).